Reading from the N-terminus, the 429-residue chain is Putative chloride channel protein ClcB-like (429 aa).

11 helical membrane passes run Met-1–Glu-21, Leu-44–Leu-64, Leu-146–Gly-166, Val-168–Val-188, Phe-200–Val-220, Leu-221–Ile-241, Leu-259–Asn-279, Val-283–Cys-303, Gly-315–Tyr-335, Ala-354–Ile-376, and Tyr-383–Ala-405.

This sequence belongs to the chloride channel (TC 2.A.49) family. ClcB subfamily.

Its subcellular location is the cell inner membrane. This Ralstonia nicotianae (strain ATCC BAA-1114 / GMI1000) (Ralstonia solanacearum) protein is Putative chloride channel protein ClcB-like.